Here is a 210-residue protein sequence, read N- to C-terminus: Outer-membrane lipoprotein carrier protein (210 aa).

The N-terminal stretch at 1-26 is a signal peptide; that stretch reads MHMIRRAAGALAVFAVAALAAAPAWA.

It belongs to the LolA family. Monomer.

Its subcellular location is the periplasm. Its function is as follows. Participates in the translocation of lipoproteins from the inner membrane to the outer membrane. Only forms a complex with a lipoprotein if the residue after the N-terminal Cys is not an aspartate (The Asp acts as a targeting signal to indicate that the lipoprotein should stay in the inner membrane). The protein is Outer-membrane lipoprotein carrier protein of Bordetella pertussis (strain Tohama I / ATCC BAA-589 / NCTC 13251).